We begin with the raw amino-acid sequence, 398 residues long: uncharacterized protein (398 aa).

Belongs to the class-V pyridoxal-phosphate-dependent aminotransferase family. Homodimer.

Functionally, is essential for optimal growth. This is an uncharacterized protein from Mycobacterium tuberculosis (strain CDC 1551 / Oshkosh).